Reading from the N-terminus, the 433-residue chain is Eukaryotic peptide chain release factor subunit 1 (433 aa).

Q182 carries the N5-methylglutamine modification. S425 bears the Phosphoserine mark.

This sequence belongs to the eukaryotic release factor 1 family. Component of the eRF1-eRF3-GTP ternary complex, composed of sup45/eRF1, sup35/eRF3 and GTP.

Its subcellular location is the cytoplasm. Its function is as follows. Component of the eRF1-eRF3-GTP ternary complex, a ternary complex that mediates translation termination in response to the termination codons. The eRF1-eRF3-GTP complex binds to a stop codon in the ribosomal A-site. Sup45/eRF1 is responsible for stop codon recognition and inducing hydrolysis of peptidyl-tRNA. Following GTP hydrolysis by sup35/eRF3, sup35/eRF3 dissociates, permitting sup45/eRF1 to accommodate fully in the A-site. This Schizosaccharomyces pombe (strain 972 / ATCC 24843) (Fission yeast) protein is Eukaryotic peptide chain release factor subunit 1 (sup45).